The chain runs to 216 residues: Large ribosomal subunit protein bL25 (216 aa).

Disordered regions lie at residues 1–21 (MAETQTLKAEAREKGSKGAVR) and 192–216 (SADNEAKTEEAGEDKSEEKSSGKED). The span at 195-216 (NEAKTEEAGEDKSEEKSSGKED) shows a compositional bias: basic and acidic residues.

It belongs to the bacterial ribosomal protein bL25 family. CTC subfamily. In terms of assembly, part of the 50S ribosomal subunit; part of the 5S rRNA/L5/L18/L25 subcomplex. Contacts the 5S rRNA. Binds to the 5S rRNA independently of L5 and L18.

Functionally, this is one of the proteins that binds to the 5S RNA in the ribosome where it forms part of the central protuberance. This chain is Large ribosomal subunit protein bL25, found in Parvibaculum lavamentivorans (strain DS-1 / DSM 13023 / NCIMB 13966).